A 201-amino-acid chain; its full sequence is Small ribosomal subunit protein uS4c (201 aa).

One can recognise an S4 RNA-binding domain in the interval 89–150; sequence MRLDNILFRL…KQRSKVLIQN (62 aa).

Belongs to the universal ribosomal protein uS4 family. In terms of assembly, part of the 30S ribosomal subunit. Contacts protein S5. The interaction surface between S4 and S5 is involved in control of translational fidelity.

The protein resides in the plastid. Its subcellular location is the chloroplast. One of the primary rRNA binding proteins, it binds directly to 16S rRNA where it nucleates assembly of the body of the 30S subunit. Its function is as follows. With S5 and S12 plays an important role in translational accuracy. In Dioscorea elephantipes (Elephant's foot yam), this protein is Small ribosomal subunit protein uS4c (rps4).